The primary structure comprises 311 residues: Putative dihydroorotate dehydrogenase A (fumarate) (311 aa).

Substrate contacts are provided by residues Lys-45, 69–73 (NSMGL), and Asn-128. 45-46 (KT) contributes to the FMN binding site. Asn-128 provides a ligand contact to FMN. Residue Cys-131 is the Nucleophile of the active site. Residues Lys-165 and Val-193 each coordinate FMN. 194 to 195 (NS) is a binding site for substrate. FMN is bound by residues Gly-220, 248–249 (GG), and 270–271 (GT).

Belongs to the dihydroorotate dehydrogenase family. Type 1 subfamily. Homodimer. FMN is required as a cofactor.

It is found in the cytoplasm. The catalysed reaction is (S)-dihydroorotate + fumarate = orotate + succinate. The protein operates within pyrimidine metabolism; UMP biosynthesis via de novo pathway. Catalyzes the conversion of dihydroorotate to orotate with fumarate as the electron acceptor. In Streptococcus pyogenes serotype M18 (strain MGAS8232), this protein is Putative dihydroorotate dehydrogenase A (fumarate) (pyrD).